The primary structure comprises 124 residues: Small ribosomal subunit protein uS12 (124 aa).

Residues 1 to 25 (MPTINQLIRKPRKSQKEKTASPALQ) are disordered. At aspartate 89 the chain carries 3-methylthioaspartic acid.

It belongs to the universal ribosomal protein uS12 family. Part of the 30S ribosomal subunit. Contacts proteins S8 and S17. May interact with IF1 in the 30S initiation complex.

With S4 and S5 plays an important role in translational accuracy. In terms of biological role, interacts with and stabilizes bases of the 16S rRNA that are involved in tRNA selection in the A site and with the mRNA backbone. Located at the interface of the 30S and 50S subunits, it traverses the body of the 30S subunit contacting proteins on the other side and probably holding the rRNA structure together. The combined cluster of proteins S8, S12 and S17 appears to hold together the shoulder and platform of the 30S subunit. The protein is Small ribosomal subunit protein uS12 of Borrelia duttonii (strain Ly).